The chain runs to 2376 residues: MASRFTFPPQRDQGIGFTFPPTNKAEGSSNNNQISIDIDPSGQDVLEEINEAPLNTFPLHQSVTDAPIIDIPSPTDMSEGTSLNNQLLLRQQQQQGTGEGQALPPTFVEEQSDQNKISMLLPEQKQQRMQESAPPDITAKSVAEDYVTTLRQQMATDWKSPSEYALHILFTKFIRYAENKLNMCLQQLDMAEPPIVEILGEGVDPSFDEIIKSLGHIAKKKPKPVIDAMMFWRKTKSEAANSASEEMEKLLKEYEFEKAHPSQAHFLMNRRLSRSSSNTTSKYKHNNNTNNLPGMKRHVSSSFNNKVPLIKASSSNNSATSSPSIANSQLKSLENTIEVAKEEAFLADRKSLISIYILCRVLNEIVKQASSNEEEDLSDKLEEIVFTQLKTTDPLSISTSLIKSSNWNSFAELLGSMSEKKFLSVSDRFIADLEKIPAYIPPELEPSTHLLILGMRYLKLRNYPLEKFEESADFMKSLSKFFAKTENFPVCLAYAEVTNQLLLPLAGSLTAEVNHPTWVEAMSTLLNTAKRLQADSKYWVSGFKLTVSILCASPPDLFSKQWLSLLEANASKVKSKSLNERIIFAVGLSRLVWVYLYRCPETLNNTTRTLTKLLQLYLNTRKKENWITGDFGLLNPLTDALISIGFLHPNFLMEQALIPLIRQSFNGSNLENINYEKLILTINTYKGLLVTKERPRFPEDDNRLYELNLNNITVNQVQEASSINHTEISDYFYKLFLLLDSSIGSEVWSPENQHQKQSSNAFSPFGFSFSNDNDSSKNKSLYVILFGTIIEAIPCCLSISRTIPYKSTIEILSRNAVHSEVIISSSSQNALRALASKKNPYTLITWFAKYSFDFDEKTQSSYNMSYLSSKEYNRLLILYVELLECWLEEFQSSNKEENKKETGLDGIRLLPIDAEQEESNETEKLEWKNTVTVIEEVEGNGLFFLCSHDAKIRRLGIQILRIIFKFDEAMMEKTEKLSNGHSRSSSHFAADRGTRLIDLLNECNTTTLINPHKATLSAVEKTRFSRLNSKYKRGLLIKLAESEYGVDAALWQRAFPKLLALVFKTCPMAMALCRSIVCIRLVQVHEIILRVANDVDFKLKNVLPETIVNQWKLYLIAACTSLTSTFDQKLHIPSNIPQHGRKKSQQIFTVQHQKIKSAKSIFKMVLPLLNAKYIMIRDAIITGLSSMNINIFKAYVEAIDVFLVAWKEGSSNNQIRVEMFHILTILSPYLKSDMIFNDEWILRKLSEFLQKTKQFLEKDSVQISYEYQSLRSYFAGLILSYYMAVREHPLIDELFPFQARASCFNFLKEWCGYGEYEPISEERYAIMIKNTESGRDRTAITTGIEFQKNRLQMIVLETMVVLCSDPITQTLDDDLELPIVISFDTEDLLAWIEALFDSDNTTVKNLGVRALENLLDKNRENFKLFRDVAFQCVSHHSHPSVAVLYYTTLCKSVLKLDNLVLDEDELVSLGLYGLVADKEDTRTFAVDLLSAVETKLHNSSYTKVFKERLANSSKTVYKSTAKEISSIFAELLSQDLCLRIFSSLVRILDLFPFEIKRDLLVLMVPWVNKFTLKSLEELDTFMVLNNLFYITIDLNDSLPNEVEQLWISLGKGNSFQNIHVSLEYIINSSMNHCNPLFVQYARDIVLYLANIPGGIGLLDTLLNNLEPKYMVPLAKHTFNEPMNNNKYSFLGNIWERLNYNGKRIIFSKAQLSIIFLVNLLTNLSESVKAKIPLLLHMSICLLDHYVPLIHESACKIASTLIFGLAPSHEKSEETVKLLRNKHALWSYDNLMKKGARSPKTMDLLIRNIISIFSDLDEFQVTWQRIALKWATTCSVRHIACRSFQIFRSLLTFLDQEMLRDMLHRLSNTISDGNVDIQGFAMQILMTLNAIMAELDPTNLISFPQLFWSITACLSSIHEQEFIEVLSCLSKFISKIDLDSPDTVQCLVAIFPSNWEGRFDGLQQIVMTGLRSANSLEITWKFLDKLNLLKDSRIIANTESRLLFALIANLPRFLNAMDRKDFTGIQVAADSLIELANAYKQPSLSRLIDSLAKNKFRSKKDFMSQVVSFISRNYFPSYSAQTLVFLLGLLFNKIGWIRVQTLEILKYVFPLIDLRRPEFIGVGADLISPLLRLLFTEYEAKALEVLDCVPNVSGSKMDKDVLRITMGNKDVKDGDNATTTLFGLPEDSGWSVPMPTMTAATTRHNVHAVFMTCGTGKSDEVSAHGSDDMDAVIEFHADGDYELGRMDTIVEFHADGDYDLGRMDTNDSISVAEEKDASLSHMWAELDNLDSFFTKDTNVPNISSKMGMGIPHGRSDSIETTRTDQTFSFESAPQLYDKKVSVILNRSLSRTPSNVSFKTHLADSFAVKINRNGKPRI.

The disordered stretch occupies residues 1–30; the sequence is MASRFTFPPQRDQGIGFTFPPTNKAEGSSN. Position 141 is a phosphoserine (Ser-141). The tract at residues 275-294 is disordered; it reads SSSNTTSKYKHNNNTNNLPG. At Ser-1144 the chain carries Phosphoserine. Thr-2264 bears the Phosphothreonine mark. Residues Ser-2267 and Ser-2355 each carry the phosphoserine modification.

The protein to S.pombe mor2. In terms of assembly, associates with CBK1.

Functionally, seems to play a role in cell morphogenesis. The protein is Cell morphogenesis protein PAG1 (TAO3) of Saccharomyces cerevisiae (strain ATCC 204508 / S288c) (Baker's yeast).